A 109-amino-acid polypeptide reads, in one-letter code: Putative double-stranded DNA mimic protein Ent638_2296 (109 aa).

Belongs to the putative dsDNA mimic protein family.

May act as a double-stranded DNA (dsDNA) mimic. Probably regulates the activity of a dsDNA-binding protein. The polypeptide is Putative double-stranded DNA mimic protein Ent638_2296 (Enterobacter sp. (strain 638)).